The sequence spans 509 residues: MQSWSRVYCSLAKRGHFNRISHGLQGVSSVPLRTYADQPIDADVTVIGSGPGGYVAAIKAAQLGFKTVCIEKNDTLGGTCLNVGCIPSKALLNNSHYYHLAHGRDFASRGIELSEVRLNLEKMMEQKSSAVKALIGGIAHLFKQNKVVHVNGFGKITGKNQVTATKADGSSQVIGTKNILIATGSEVTPFPGITIDEDTIVSSTGALSLKKVPEKLVVIGAGVIGVELGSVWQRLGADVTAVEFLGHVGGIGIDMEISKNFQRILQKQGFKFKLNTKVTGATKRSDGKIDVSVEAASGGKAEVITCDVLLVCIGRRPFTQNLGLEELGIELDPRGRIPVNTRFQTKIPNIYAIGDVVAGPMLAHKAEDEGIICVEGMAGGAVHIDYNCVPSVIYTHPEVAWVGKSEEQLKEEGIEYKVGKFPFAANSRAKTNADTDGMVKILGQKSTDRVLGAHILGPGAGEMVNEAALALEYGASCEDIARVCHAHPTLSEAFREANLAASFGKPINF.

Residues 1–35 (MQSWSRVYCSLAKRGHFNRISHGLQGVSSVPLRTY) constitute a mitochondrion transit peptide. Lys66 carries the post-translational modification N6-acetyllysine; alternate. Position 66 is an N6-succinyllysine; alternate (Lys66). FAD contacts are provided by residues 71–80 (EKNDTLGGTC) and Lys89. A disulfide bond links Cys80 and Cys85. Lys122, Lys132, and Lys143 each carry N6-acetyllysine; alternate. Residues Lys122, Lys132, and Lys143 each carry the N6-succinyllysine; alternate modification. Residue Gly154 participates in FAD binding. 2 positions are modified to N6-succinyllysine: Lys159 and Lys166. 183-185 (TGS) is an FAD binding site. NAD(+) is bound by residues 220-227 (GAGVIGVE) and Glu243. 2 positions are modified to N6-succinyllysine: Lys273 and Lys277. Val278 contributes to the NAD(+) binding site. 2 positions are modified to phosphoserine: Ser285 and Ser297. Gly314 is an NAD(+) binding site. At Lys346 the chain carries N6-acetyllysine. FAD is bound by residues Asp355 and 361–364 (MLAH). An N6-acetyllysine; alternate modification is found at Lys410. Residue Lys410 is modified to N6-succinyllysine; alternate. Residues Lys417 and Lys420 each carry the N6-acetyllysine modification. Lys430 carries the post-translational modification N6-succinyllysine. His487 acts as the Proton acceptor in catalysis. The residue at position 502 (Ser502) is a Phosphoserine. Lys505 is subject to N6-acetyllysine; alternate. Lys505 carries the post-translational modification N6-succinyllysine; alternate.

Belongs to the class-I pyridine nucleotide-disulfide oxidoreductase family. In terms of assembly, homodimer. Part of the multimeric pyruvate dehydrogenase complex that contains multiple copies of pyruvate dehydrogenase (subunits PDHA (PDHA1 or PDHA2) and PDHB, E1), dihydrolipoamide acetyltransferase (DLAT, E2) and lipoamide dehydrogenase (DLD, E3). These subunits are bound to an inner core composed of about 48 DLAT and 12 PDHX molecules (by non covalent bonds). The 2-oxoglutarate dehydrogenase complex is composed of OGDH (2-oxoglutarate dehydrogenase; E1), DLST (dihydrolipoamide succinyltransferase; E2), DLD (dihydrolipoamide dehydrogenase; E3) and the assembly factor KGD4. It contains multiple copies of the three enzymatic components (E1, E2 and E3). In the nucleus, the 2-oxoglutarate dehydrogenase complex associates with KAT2A. Interacts with PDHX. Requires FAD as cofactor. Tyrosine phosphorylated.

The protein resides in the mitochondrion matrix. It localises to the nucleus. Its subcellular location is the cell projection. The protein localises to the cilium. It is found in the flagellum. The protein resides in the cytoplasmic vesicle. It localises to the secretory vesicle. Its subcellular location is the acrosome. The catalysed reaction is N(6)-[(R)-dihydrolipoyl]-L-lysyl-[protein] + NAD(+) = N(6)-[(R)-lipoyl]-L-lysyl-[protein] + NADH + H(+). Functionally, lipoamide dehydrogenase is a component of the glycine cleavage system as well as an E3 component of three alpha-ketoacid dehydrogenase complexes (pyruvate-, alpha-ketoglutarate-, and branched-chain amino acid-dehydrogenase complex). The 2-oxoglutarate dehydrogenase complex is mainly active in the mitochondrion. A fraction of the 2-oxoglutarate dehydrogenase complex also localizes in the nucleus and is required for lysine succinylation of histones: associates with KAT2A on chromatin and provides succinyl-CoA to histone succinyltransferase KAT2A. In monomeric form may have additional moonlighting function as serine protease. Involved in the hyperactivation of spermatazoa during capacitation and in the spermatazoal acrosome reaction. The chain is Dihydrolipoyl dehydrogenase, mitochondrial (DLD) from Cricetulus griseus (Chinese hamster).